The primary structure comprises 215 residues: UPF0056 membrane protein bbp_248 (215 aa).

Transmembrane regions (helical) follow at residues 10-32, 52-74, 78-100, 119-141, 151-169, and 190-207; these read IYIS…PIFT, FSVA…LFGI, SFRI…GNFI, ISIV…TIVW, IFGC…WTLF, and IMGL…LAGL.

The protein belongs to the UPF0056 (MarC) family.

The protein localises to the cell membrane. This is UPF0056 membrane protein bbp_248 from Buchnera aphidicola subsp. Baizongia pistaciae (strain Bp).